The sequence spans 468 residues: ATP synthase subunit beta (468 aa).

155-162 contributes to the ATP binding site; sequence GGAGVGKT.

This sequence belongs to the ATPase alpha/beta chains family. As to quaternary structure, F-type ATPases have 2 components, CF(1) - the catalytic core - and CF(0) - the membrane proton channel. CF(1) has five subunits: alpha(3), beta(3), gamma(1), delta(1), epsilon(1). CF(0) has three main subunits: a(1), b(2) and c(9-12). The alpha and beta chains form an alternating ring which encloses part of the gamma chain. CF(1) is attached to CF(0) by a central stalk formed by the gamma and epsilon chains, while a peripheral stalk is formed by the delta and b chains.

It is found in the cell membrane. The catalysed reaction is ATP + H2O + 4 H(+)(in) = ADP + phosphate + 5 H(+)(out). In terms of biological role, produces ATP from ADP in the presence of a proton gradient across the membrane. The catalytic sites are hosted primarily by the beta subunits. The protein is ATP synthase subunit beta of Streptococcus pyogenes serotype M1.